The sequence spans 223 residues: Adenylate kinase 4, mitochondrial (223 aa).

15 to 20 (GSGKGT) is a binding site for a ribonucleoside 5'-triphosphate. The NMP stretch occupies residues 35–64 (SSGHFLRENIKASTEVGEMAKQYIEKSLLV). Positions 36 and 41 each coordinate AMP. K60 bears the N6-succinyllysine mark. AMP contacts are provided by residues 62–64 (LLV), 89–92 (GFPR), and Q96. An LID region spans residues 125 to 162 (RRWIHPPSGRVYNLDFNPPHVHGIDDVTGEPLVQQEDD). A ribonucleoside 5'-triphosphate is bound by residues R126 and 135–136 (VY). Position 170 (R170) interacts with AMP. K175 bears the N6-acetyllysine mark. N6-acetyllysine; alternate occurs at positions 179 and 186. N6-succinyllysine; alternate is present on residues K179 and K186. An a ribonucleoside 5'-triphosphate-binding site is contributed by T199.

The protein belongs to the adenylate kinase family. AK3 subfamily. In terms of assembly, monomer. Interacts with SLC25A5/ANT2. In terms of tissue distribution, highly expressed in kidney, moderately expressed in heart and liver and weakly expressed in brain.

It is found in the mitochondrion matrix. It carries out the reaction a ribonucleoside 5'-phosphate + ATP = a ribonucleoside 5'-diphosphate + ADP. It catalyses the reaction AMP + ATP = 2 ADP. The catalysed reaction is GTP + AMP = GDP + ADP. The enzyme catalyses CMP + ATP = CDP + ADP. It carries out the reaction GTP + CMP = CDP + GDP. It catalyses the reaction dAMP + ATP = dADP + ADP. The catalysed reaction is dCMP + ATP = dCDP + ADP. The enzyme catalyses a 2'-deoxyribonucleoside 5'-diphosphate + ATP = a 2'-deoxyribonucleoside 5'-triphosphate + ADP. It carries out the reaction a ribonucleoside 5'-diphosphate + ATP = a ribonucleoside 5'-triphosphate + ADP. It catalyses the reaction GDP + ATP = GTP + ADP. The catalysed reaction is CDP + GTP = CTP + GDP. The enzyme catalyses CDP + ATP = CTP + ADP. It carries out the reaction UDP + ATP = UTP + ADP. It catalyses the reaction GTP + UDP = UTP + GDP. The catalysed reaction is dADP + GTP = dATP + GDP. The enzyme catalyses dCDP + GTP = dCTP + GDP. It carries out the reaction dCDP + ATP = dCTP + ADP. It catalyses the reaction dGDP + ATP = dGTP + ADP. The catalysed reaction is dTDP + GTP = dTTP + GDP. The enzyme catalyses dTDP + ATP = dTTP + ADP. Its function is as follows. Broad-specificity mitochondrial nucleoside phosphate kinase involved in cellular nucleotide homeostasis by catalyzing nucleoside-phosphate interconversions. Similar to other adenylate kinases, preferentially catalyzes the phosphorylation of the nucleoside monophosphate AMP with ATP as phosphate donor to produce ADP. Phosphorylates only AMP when using GTP as phosphate donor. In vitro, can also catalyze the phosphorylation of CMP, dAMP and dCMP and use GTP as an alternate phosphate donor. Moreover, exhibits a diphosphate kinase activity, producing ATP, CTP, GTP, UTP, TTP, dATP, dCTP and dGTP from the corresponding diphosphate substrates with either ATP or GTP as phosphate donors. Plays a role in controlling cellular ATP levels by regulating phosphorylation and activation of the energy sensor protein kinase AMPK. Plays a protective role in the cellular response to oxidative stress. This Homo sapiens (Human) protein is Adenylate kinase 4, mitochondrial.